We begin with the raw amino-acid sequence, 66 residues long: Moricin-1 (66 aa).

Positions 1 to 24 are cleaved as a signal peptide; sequence MNILKFFFVFIVAMSLVSCSTAAP.

As to expression, expressed in fat body and to a lesser extent in hemocyte and Malpighian tubules.

The protein localises to the secreted. In terms of biological role, has antibacterial activity against Gram-positive and Gram-negative bacteria. Probably acts by disturbing membrane functions with its amphipathic structure. In Bombyx mori (Silk moth), this protein is Moricin-1 (MOR1).